Consider the following 169-residue polypeptide: Disulfide bond formation protein B 1 (169 aa).

Topologically, residues 1–14 (MSDNTLYLRREKRF) are cytoplasmic. Residues 15–31 (LVLLGIICLALIGGALY) form a helical membrane-spanning segment. Residues 32 to 49 (MQIVLGEAPCPLCILQRY) are Periplasmic-facing. Cysteines 41 and 44 form a disulfide. The chain crosses the membrane as a helical span at residues 50 to 64 (ALLFIAIFAFIGAAM). Over 65 to 71 (SGRRGVT) the chain is Cytoplasmic. Residues 72–89 (VCETLVTLSALGGIAAAG) traverse the membrane as a helical segment. Residues 90 to 144 (RHVWILAHPSDSCGIDVLQPIVDGLPLATLFPTGFQVSGFCTTPYPPVLGLSLAQ) are Periplasmic-facing. Cysteine 102 and cysteine 130 are oxidised to a cystine. The chain crosses the membrane as a helical span at residues 145 to 163 (WALAAFVLTAVLVPACIIR). Topologically, residues 164-169 (NRRKPY) are cytoplasmic.

The protein belongs to the DsbB family.

The protein resides in the cell inner membrane. Its function is as follows. Required for disulfide bond formation in some periplasmic proteins. Acts by oxidizing the DsbA protein. The protein is Disulfide bond formation protein B 1 of Pseudomonas savastanoi pv. phaseolicola (strain 1448A / Race 6) (Pseudomonas syringae pv. phaseolicola (strain 1448A / Race 6)).